The primary structure comprises 210 residues: Imidazoleglycerol-phosphate dehydratase (210 aa).

It belongs to the imidazoleglycerol-phosphate dehydratase family.

It is found in the cytoplasm. It catalyses the reaction D-erythro-1-(imidazol-4-yl)glycerol 3-phosphate = 3-(imidazol-4-yl)-2-oxopropyl phosphate + H2O. Its pathway is amino-acid biosynthesis; L-histidine biosynthesis; L-histidine from 5-phospho-alpha-D-ribose 1-diphosphate: step 6/9. The sequence is that of Imidazoleglycerol-phosphate dehydratase from Mycobacterium bovis (strain ATCC BAA-935 / AF2122/97).